A 273-amino-acid chain; its full sequence is Mitochondrial distribution and morphology protein 12 (273 aa).

One can recognise an SMP-LTD domain in the interval 1–273 (MSIDFDWSKL…LVWPSYITIE (273 aa)). The interval 124 to 145 (LTSPIPESRPSTPMDNHQERDR) is disordered.

It belongs to the MDM12 family. Component of the ER-mitochondria encounter structure (ERMES) or MDM complex, composed of mmm1, mdm10, mdm12 and mdm34. A mmm1 homodimer associates with one molecule of mdm12 on each side in a pairwise head-to-tail manner, and the SMP-LTD domains of mmm1 and mdm12 generate a continuous hydrophobic tunnel for phospholipid trafficking.

The protein localises to the mitochondrion outer membrane. Its subcellular location is the endoplasmic reticulum membrane. Its function is as follows. Component of the ERMES/MDM complex, which serves as a molecular tether to connect the endoplasmic reticulum (ER) and mitochondria. Components of this complex are involved in the control of mitochondrial shape and protein biogenesis, and function in nonvesicular lipid trafficking between the ER and mitochondria. Mdm12 is required for the interaction of the ER-resident membrane protein mmm1 and the outer mitochondrial membrane-resident beta-barrel protein mdm10. The mdm12-mmm1 subcomplex functions in the major beta-barrel assembly pathway that is responsible for biogenesis of all mitochondrial outer membrane beta-barrel proteins, and acts in a late step after the SAM complex. The mdm10-mdm12-mmm1 subcomplex further acts in the TOM40-specific pathway after the action of the mdm12-mmm1 complex. Essential for establishing and maintaining the structure of mitochondria and maintenance of mtDNA nucleoids. In Schizosaccharomyces pombe (strain 972 / ATCC 24843) (Fission yeast), this protein is Mitochondrial distribution and morphology protein 12.